Reading from the N-terminus, the 323-residue chain is Cyclin-H (323 aa).

S5 is subject to Phosphoserine; by CDK8. S132 carries the phosphoserine modification. The tract at residues G296–L323 is disordered. S304 is modified (phosphoserine; by CDK8). Over residues E310–L323 the composition is skewed to acidic residues. At T315 the chain carries Phosphothreonine.

This sequence belongs to the cyclin family. Cyclin C subfamily. Associates primarily with CDK7 and MAT1 to form the CAK complex. CAK can further associate with the core-TFIIH to form the TFIIH basal transcription factor.

It is found in the nucleus. Its function is as follows. Regulates CDK7, the catalytic subunit of the CDK-activating kinase (CAK) enzymatic complex. CAK activates the cyclin-associated kinases CDK1, CDK2, CDK4 and CDK6 by threonine phosphorylation. CAK complexed to the core-TFIIH basal transcription factor activates RNA polymerase II by serine phosphorylation of the repetitive C-terminal domain (CTD) of its large subunit (POLR2A), allowing its escape from the promoter and elongation of the transcripts. Involved in cell cycle control and in RNA transcription by RNA polymerase II. Its expression and activity are constant throughout the cell cycle. The polypeptide is Cyclin-H (Ccnh) (Rattus norvegicus (Rat)).